The sequence spans 7763 residues: MGSIGNVQSPLPRCVQSMHAPSVMQEEMIVSTIADPSHKSYFETYHFSAQGIVDPDQLNGAIHAVARKHAVLRSVFVHPTEFDSTNVQIAVLDQAYTLHRAKLLSLQPIGEEIRFGILPLESIGTDEWDGVMPWKFSLVVCEREQKSYITVRYHHALLDGWSARALLELVQQEMLNPGAVLKGSDFFSLVRQPLKRDWKQDETLLRERLAQIETSPILSPGPVANGDLRVGEVTREVSISSDIWLPDRPAVPARLLRLALGMTISVFRNSDDSLFLEITSARSRLFPKDQQVLGPVLAPQVRNIHLKEHTTLGECMQLLRSSNDPQHNFSVSQLKSFLTESSRDLDVCLVCQTNESYPSNGVGHWEWIKGEARNDLPFILEILPPKEGVFFAKIRYHQNRFEKQFADSFLEFFCQTLTWMQATGNSIDHQTFAAAVSEICRQGDYRQHYLALNPRGVSDDPVNVHDLIEQAASKWPSKIALEAEHNQFMTYAELSNESDRVAKGLRHCLPRDQKDQPLVPICFDKSVDMVVAIVAVLKAGGAYVPLDPSQPRDRLVSILSACHATVVIAGQTDLQDVLHSTCSELSILVTSIENLSEHDKSTDELSGSEHPPPSSLAYVLFTSGSTGTPKGVMVEHRNLVAFMKAGEGNADGTWTSTRLQLAAYSFDASIGDIFANLYRGGRLALVQRNKMLSNLNHWLEEMLITHLALTPTIGDLIISHLPPRLQTLMFGGEPFHQSFLAQAPAEARVWNTCGPTETVVDVACCILQKENPDVPIGRPFGQCQIYILRRGGSNTAVPPNAIGEICVAGPQVSRGYLERPDLTSLGFVTDPFRPSQRMYRTGDLGRLNHRGMLEHLGRADGQIKLRGLRVETGEVEVTIKQSSSIIAQVTVSVNHLEGYDREALVAWIVPEASQGSQDIELAWQEDIMPSCQRRLVPYMIPEVWIMISYLPLTVSGKLNRGTLASWVEHVATGGTHDGLYVITAPWKTQEITQRLPESPAERLLVATCANILGTTLHAVSMDSTFIALGGNSLLAMRLLAALRQEGMNCSLRDLLTPMTLGDVARAMSPSSTPKKQITKAFYHEDSWERIVADSSIAADTIDAIYPCTPQQEGLIQTSLHGDKSAYFATITVHLGDSLNLRTFHAAWNRLVFGCDMLRTAFVSFSEVQHPPVSESNILQVVLSQSAEDVRRLVSLDNRDIAFQFGVVPLSAGISQGSVNEPWRLHLKIHHALYDEAFLSRIVAELCIVYEALEMESSEAALPPSRPFSAFVESLCNDDPEVSKGFWKKYMHEVAPATWPVASGIRRMREENGQDVEMTVVKSWTGNAVALGQKFQATPASIVRAALALALAQYSQTDDVVFGEVSSGRFDHDRFTLGPCLATHPVRIQIDRKSSSGMLKLVTQALESYLATTPYQHCGLASIHRQTADPDLMAFQVLFAHQEAFVEYTAGSRFHVKSAKLRNIGFPLVLESRCDRSTGNLAFECSFDRRYLGDQDVDWFLRSICRTLDMFSAGARDGLSDQKLITGVVDEEMRRAIEKWSTKRTPFGSTFTRNAEICAHELFEMQADMTPQKIALQVNQSEFITYKELNKRCNQLSNALVNWLDSLGLEQSRDQQIVPLCFSNAVDMVIAMIAVLKAGAAYLPIDQNHPQERIQQILSLSGARAMLGDGEAETLEKLQAASKQANSTLITSKRLRTLYGGQTAKKPSFRPTPASLAYVIFTSGSTGKPKGVMVEHGNLAAFMQANEPEAVGTWTSVRLQLATATFDAATGETFGTLGCGGRLILGQTHEILAGLPDWLERTNITHLFVTPRVAANFLTEIHPPYLRTLHIGGEAFDPSILPHMPPGCDVYNVFGPTETTIYATHYKIRKGDGIRRNIPIGYPFGGCRLYILNPETLEQVPIGVIGEICIGGPQVTRGYQGRPELTSRSFLSDPHIVGERMYRSGDLGRLCGDGSIEHHGRIDSQIKLRGLRIEISEIESVCLEHAIATACTVIVLDREDGQVLVAFVQTQKDQQTSTCSQDWAETESILHRHLDSRLPSYMVPSRFVPIEVMPLTTSGKVDRRQLGARAETMDQAGELFTSQHTNHAGSWEQGSIEDKIADAWVQVLGIDRANITPNVAFSRLGGDSIRAIRLLSLLRKAGLKLNMTDVSNASTIFSQAKCATSHTVAAKKSTEDATDIDAHTGPVALGPIAGRYAGIQLKYASQRGEQIIDHFNQSVLLDVTTLCPLRLQQALQRLRNHHDPLRAIVHWSLDIPVEEWTIRILPCSDIKPLVLDSPRTLTLQALREQIQHRITGLDIRRGKVMDAELYRLDGDSRVFLFWTVHHFVVDIVSWQILRDDLNVLVRAKEEPESIALQPATMSFLAWTREGQMKSQDASLATGSIPEEPDILLSSSDSDQLPLWVRQPELVPIHPVNRTTTSASLSPCITALLLGRSNNVLSTEPLDLLLAGLAMTISKHFARAVDRLVVGLETHGRHTGTNTADLSRSIGWFTAIIPMILDCRCESSSIESVVRRVKDQRRLLMENDRGFRHFVASRWSTANARKSEIMPLVFNYQGVRHDPHDHDEMMLHPVQIPGLSWIESSPHAIPLSHAAFELYVHDRQAYIEATWPSDGEMDQEDVATLMGEQITNICQYLAEKDVLGKTSISASSTSAFGLLPDDCFDRVFSLYPEDTLDDIIPCTPMQRALLYEGIADHESRSYVTCRIWRIPTDQAICSQIEGAVKSLIQRHGILRTVFHIDPEVGPLALVLRDTQSPTASAVGHVKVKDHTEMEERVTSLLCNPDYGNPMKQAFYVRIVHAADGSGARLIWLLHHSLIDAWSQDLLLSELTQILVDGCPTKSLIPRPSFGSFARYVTSDSRADHSHGKFWSETLNGVQPKSLPLSLMSSSPINAAAVVVEQACNLAILSENCISPAALVSLAWSLVLSEILDTDDVTHGMLFSGRQLPVDGVADIIGPCISTVPIRTHLNRHGKVLDLLQSTEAAIRLAGSHSTVGVDGVARAAGVEAPALVNTLLNFFGVRTDVLENDGLNSILELDSVDDGLPPSITLSCWQREVDANIMVMRLERRHPLQIGIAQCLVKRMAWYCHTLSHHMDRKLDSVLSITSNEDQLLTKWSQPVDSRPSDSYPCIHDLITGWAAQVPEKVAVQVAESQFVTYGEIEKKSTAIARVIERLVDPRSGSTPPLIPICCDRGVDMVIAILAILKAGAAYVPLNISDPEGRLEAILRQTGSTILVDGLLDKGSRRKLHALGDRTSTTVYTVDGLSILPPSEVSLRKAHSESLAYVLFTSGSTGEPKGVMIEHRNLTSFITTQHNEIIGRWTSCRMPVAAYTFDVSMADLLISLAIGARVALVDSEKMLASMPYWADRTLATTLSMTPTLASLLARSLPPHVAVLMLAGEVFDPNIMKALPRECRVWNGYGPTETFYASFHPVDAQPTHAQVPIGRSFGGNRIYILRPGSNYRQPIGAIGEICIGGTQVARGYLGREDLTSRSFTRDPYNTQTVLYRTGDLGRFTDCGVVEYLGRMDDQIKIRGQRAEPAEIESVVHAASPRVAHAIVDLYQSKRGGGLPRLIAFISTKDPVPPSLCKTFLQEEVEPSCRNQLPGHMMPSTWIYVRTVPLTSSGKADKRMLRSWMARLEEGETVPEASIIELSLSTQMNSETHQDISGGPESPTEIMLRQSCAQLFKVNEDIISLDKSFISSGGDSLLALQLNARLREKGLKCTPRDIVEAQSLAELATILNTSYEAVSPVHMADWTLDLNEMARLPDNGIQGWETIVQRVGIDPGQVRCVMPCTPFQEGVLSSNDESGSSAGYLAHMTVGLGKEIDVEALKYAWQETVDHEDMLRTTFIPADMDMTDIRGLGQGSSLLQVVLYPESPQAGRVKTMKTVSTPATPNAALPSYPSLQGKAQQGHIPVAALVAIGSQDGEGQECTLLITMHHALYDEAYLSLLLKDLSGRYRSIACNEVVPQVPEDQRIPFSTYVRFVHSKLGTAPSTSTAGKFWKSYLADATPSTWPLPHGMQSSITSVKSPETAVLEWTGNLRAAASKVQVTAAAIARAALALTVAEHTNVTDVVLGEVSKGRPDIRGPGDARARFITGPCATTHPVRIRIADEGASKRRTMLQLLRESFTSYMETLPHQFYGLSRIREQSCRVDLLPFQVLFVYQDAFRQKEGLAGDDAFQIQGGNLGQMGFPIVLECSCLSGDSGVVFHCTYAPDVIDKPRIEWFLHHISQSIDALVQVDPARSDSLRSARVPLSAQETRQLELWSRCHAAKDVEKVDDTMPTETSSITHAFDDTARNLHEKRSTSLSMALQRHIVSLDDVGSQQPIIPICFERSTDMVVAILAILKAGAAFVPLEPGYPPERLISIVRTARASLMICGKEDKSNEILVSVCHATNTKLITLEDLKSRPASSDQAVISRYCRDDSRIAYVLFTSGSTGTPKGVVITHRNLLAFMRHNNPDVHGRWYNSRMPVASYTFDVSMADIITTLCCGGRVVLVPVQKLLPSLGAWVDASITSHISLTPTIANMLWEPVKNAEIAFPFLSVLLLAGEVFDAQLMSYVPKECRVWNGYGPTETFYVTFYRVPKAHAKEQTSVSIGYPFGENVIHLLGFESNDHVPVGCIGEICVMGPQVAQGYLGQPELTKQRFKRGVISQAPEGFLYRTGDIGRFHPDGKLEYLGRFDRQIKIRGQRVELAEIEMAIAQHSFVDGCAVVVVNTPTGDSLVGFCVKTSSQTPGKGWDANTAVQIKTWISTRLPAHMVPSYLFPLEGELPRVPSGKVDRQLLAQRATDLLADSLLSSQGQDTYIAPTTEREKVICEIFEETLAQRVSVLDNFLHLGGHSILAIRAVSKINHRLHANLTFKDVFDFATARDLARQLESTATNHRSYTSIPRLTQDKMIVRQSFAQGRLWFLDQLHPGSTWYLMPFGLRIQGDLHLDALEAAVSAIEERHETLRTTFEHRDGENVQVVHPFAHRQLRVVEVPPAVDEEGLLGALKEEQSTPFDLQVHPGWRPLVLRQNKRSHILSIVIHHIICDGWSVAVLLKELSTFYSAALHGKPIHAQLPPLPIQYRDFSAWESQKEQRVEHDRQLKYWIEKLTGSKPAEFICDKRRPQAPSRQAIFEEVRIDGAMYDQLRQYCKQHQLTPFIVLLAVFRATHYRLTREADATIGTPIANRGREELHDIIGLFVNVQCIRLKVDDHHTTFEDLVNQAQSTATEAFAHQDIPFDRIVSALQPDRETTQNPLVQTVFAVHPQTQGKEELEGLLTEQILLSRTTRFDLEFHLFQEEDGLSGQVVFAQDIFFPETVKAMISVFYAVLECGLNQPSISVASMALLNDLSMHDMDDLLSINQTDYPRDATVVDLFRQEARSHPDSIAIVHEGKEVTYGELDRQSDNIERWLRSLHLDRETIVGVLAARSAEAITVFLGIMKADLAYLPLDASTPQTRICSVLSCISERITVIVVDGAQVAVPDVSLAHVDFVALSNLLDDQRHKPSDNQKFESESSISATSLACVLFTSGSTGRPKGVMIEHRAIVRLAKDFNFAKAAGKPLAHMASLSFDVSTWEVFMPLLSGGVVVCVDAMTVLDYKALSDVYARHHVRAAMFTPALFKQCLHDSPSIVKNLDLLILGGDRLDPEDVFQAKQLTQGIILNGYGPTENTGASTIYPIPDEESCVNGVPIGKPIGNSGAYVMDDSLNVVPKGVVGELVVTGDGLARGYTDPEKNEGRFVHVVIGQDTVRAYRTGDYARWRPIDGQLEYFGRRDDQVKIRGNRVEIGEIEHNILSHSAVRSAAVVMNGVGAEADLAAFVTLHPIHDDVAETERVDAWKNVFDTEAYDSFTHQPNRLGRDFVGWLSMYDGCNIDLTEMDEWLDDTLQTLLNGQDPGKVLEIGTGSGMILFNITKGLEEYVGIELVPKLAHMVEQVANADQRLAGRVKVHPGVADRVEDFIPGFIPDLVIINSVAQYFPSAGYLSEIVQKLVRLQGVKSLFFGDIRSYPLYDEFLVSKALHNAGARATQDQIRKCIEESKAAETELLVDPAFFTSLTNQFPDQVAHVEILPKLMNATNELSCYRFSAVVHLKHATAATRIACQVKKADWIDYTARSLNSRSLLEHLRSSHDNTIIAVENIPNRRTILERYIVDALKEGVEPRSMDTKSHWQVRHRNRAAQSSALLPGDLVAIANQAGFQVEISWARQSSQRGAFDAIFHRMGPNSRRQRVLFDFPVDHQCRDVDSFTNHPVQGQQDQQCIFELKESLRAQLPAYMIPRTITILDQLPLTDRGKVDRQALRQRIIKQEPVATESESSAGRVTVEYGSEMERILCDVFAEVLGLQSVDRESSFFSLGGHSLLAPRLASRVSKRLDCTATVRDLFDCPTPVRLADRLLSKQSDSNTEANTSTDGKTQHSALDKVKYHNTLRDWGVQSSEVGHLMPCTPFQEGVLSNSLAVPGDSGYLSVVRLGLQSQLDTKAMRLAWQKVVEREETLRTAFIPVAEDLSSACITSSTFWQCIFNINSREVQRLLCIEGRNSGVDRSALGFGHIPVSLILTDVPTVCKARGVGSTQLELTIHHALYDEAYFRWIIHELSREYHKARLAKDYVPLRAPQTSMNRIPFSIFVSQLQAMPKESATSFWKSYLNGAPAACWPVARGLESGRITEIDEFSSRSLIWKGNMHNLAGARGVTPAAISRAAVALVVAEHSGVEDIVLGEVSSGRSITDGAAGFVAGPCISTHPIRIRMQQRQGSRSSQHRLSFDQLVKQSLNSYLETVPYHQLGLPSIRRQSDAPDLLPFQVLFVYQQAFDFETDSREEASHNFKVQGGHLGRFEFPVVLQASCHPVTGHMSLQCMFDPTVLITEDIEWFLEHISQVLSSIADSSSQPVARLTVGDAEEAALTKLSCAKDQTPELPLGTDSESLCAHDLISRQAMESPCKIAVQYELSQFMTYGELDRESTKLSIVIRAFFDHLSKSVSHEQPLVPISFDKGLDMIVTMLAVLKAGAAYIPLDISHSEQRLRMICQSAQAKLILWDGQNGFDKLRAIGHSSGATISTVDELSDAVDGWGSTPRSGEKPNLSSLAYIIYTSGSTGVPKGVMVNHANLVSFMRSATNETYMSWTANRLQIASYAFDMSVSDIFPVLAVGGRVLLARQQSLWSDLAGWVDAFAVNQLMTTPTVADMMLSSALSDGFLLAHLRDVIVGGEAVKRDILDKAPTEMVFWIQYGPTETTVVVTGCMFRGPTYYQPVPHSQITTIGFPLRGCRVYILQPGTSNRVPIGVPGELCISGPQVTMGYRGGGDPSESPFVPDPFWAGQTMYRSRDIAKVHGDGMIEWVGRMDSQVKLRGLRIDLGEIESAARQLNGVQSCAVVKLALEDKETLLAFIEVAKSHQTHITPVTIQQHIAQNVPSYMVPAHLRLLDKPLPRTASDKLDRKGIHALAQQLVDNGDLLSSCTSRIPPADLRPSPGTLEATLASYWGTILGIDQEVISLETPFSHLGGDSVRAISLLALLRRNNFQLNLTDLGSFSTIRSQAFRILCDVQPQKLPAYMQLTTRSTSRATMVLIHPFFGQSSVFDHVVPALSEQYDIVQVSDPFFGKPDGPASLRDWAAHYLEALHVHLEQDRPVVLVGYSFGGLLVLEMARLLEMTGKGSPFSTVIVDTRCYDPDQPFFKDEEERQTAADDAVRLFGPGQTSMIEEHFDKHAHIWENSVCPDKYLGRSLYLATPEAVESGIVDWWRNQCPHIEVQRVECSHGEIFEPAMTGRVSALINGHCDLDFTRIEP.

The segment at 20 to 168 is condensation 1; it reads APSVMQEEMI…DGWSARALLE (149 aa). The segment at 469-866 is adenylation 1; sequence EQAASKWPSK…GRADGQIKLR (398 aa). The 77-residue stretch at 995–1071 folds into the Carrier 1 domain; it reads LPESPAERLL…DVARAMSPSS (77 aa). The residue at position 1032 (Ser-1032) is an O-(pantetheine 4'-phosphoryl)serine. The condensation 2 stretch occupies residues 1104 to 1526; that stretch reads IYPCTPQQEG…GLSDQKLITG (423 aa). The tract at residues 1562 to 1968 is adenylation 2; the sequence is FEMQADMTPQ…GRIDSQIKLR (407 aa). A Carrier 2 domain is found at 2090-2166; the sequence is WEQGSIEDKI…SQAKCATSHT (77 aa). Ser-2127 carries the O-(pantetheine 4'-phosphoryl)serine modification. The segment at 2212–2556 is epimerase (E); the sequence is DHFNQSVLLD…IMPLVFNYQG (345 aa). A condensation 3 region spans residues 2676–3016; the sequence is DIIPCTPMQR…PALVNTLLNF (341 aa). The segment at 3136–3531 is adenylation 3; it reads WAAQVPEKVA…GRMDDQIKIR (396 aa). In terms of domain architecture, Carrier 3 spans 3667–3743; it reads GPESPTEIML…ELATILNTSY (77 aa). Position 3704 is an O-(pantetheine 4'-phosphoryl)serine (Ser-3704). Positions 3789–4238 are condensation 4; sequence VMPCTPFQEG…ISQSIDALVQ (450 aa). An adenylation 4 region spans residues 4321-4687; the sequence is VGSQQPIIPI…GRFDRQIKIR (367 aa). Positions 4806 to 4880 constitute a Carrier 4 domain; that stretch reads APTTEREKVI…DLARQLESTA (75 aa). Residue Ser-4840 is modified to O-(pantetheine 4'-phosphoryl)serine. The segment at 4902 to 5339 is condensation 5; the sequence is SFAQGRLWFL…ALLNDLSMHD (438 aa). The adenylation 5 stretch occupies residues 5361–5765; the sequence is FRQEARSHPD…GRRDDQVKIR (405 aa). The tract at residues 5820–5975 is S-adenosyl-L-methionine-dependent N-methyltransferase; the sequence is DAWKNVFDTE…YLSEIVQKLV (156 aa). Residues 6306–6381 enclose the Carrier 5 domain; it reads EYGSEMERIL…RLADRLLSKQ (76 aa). At Ser-6341 the chain carries O-(pantetheine 4'-phosphoryl)serine. Residues 6378–6399 are disordered; the sequence is LSKQSDSNTEANTSTDGKTQHS. Over residues 6379–6399 the composition is skewed to polar residues; sequence SKQSDSNTEANTSTDGKTQHS. Residues 6424–6883 are condensation 6; it reads MPCTPFQEGV…TVGDAEEAAL (460 aa). An adenylation 6 region spans residues 6913-7327; the sequence is RQAMESPCKI…GRMDSQVKLR (415 aa). The 77-residue stretch at 7446-7522 folds into the Carrier 6 domain; it reads PSPGTLEATL…SQAFRILCDV (77 aa). Ser-7483 is modified (O-(pantetheine 4'-phosphoryl)serine). Residues 7542–7638 are thioesterase (TE); sequence TMVLIHPFFG…TGKGSPFSTV (97 aa).

This sequence belongs to the NRP synthetase family.

Functionally, nonribosomal peptide synthetase; part of the gene cluster that mediates the biosynthesis of the aspergillicins A and F, 2 cryptic cyclic hexa-depsipeptides. The hexamodular NRPS agiA catalyzes the condensation of the six amino acid residues including N-Me-L-O-Me-tyrosine, L-proline 1, L-proline 2, D-isoleucine, O-acetyl-threonine, and L-isoleucine. The starting condensation domain (C1) of agiA probably loads acetyl-CoA which is condensed on the N-terminus of threonine by the first module to yield O-acetyl-threonine. The second module then loads L-isoleucine. The epimerase (E) domain on module 2 is probably involved in the formation of the D-isoleucine moiety. Modules 3 and 4 further load 2 successive L-prolines. Module 5 is then involved in the condensation of O-Me-L-tyrosine produced by the O-methyltransferase agiB and the N-methyl transferase (NMeT) domain on module 5 probably catalyzes the N-methylation to yield the N-Me-L-O-Me-tyrosine moiety. The A domain of module 5 loads preferentially O-Me-L-tyrosine, but it can also accept L-phenylalanine, which leads to the production of aspergillicin G. Module 6 then loads the last residue, L-isoleucine. The C-terminal thiolesterase (TE) domain probably cyclizes the peptide using the hydroxy group from threonine to form the cyclic depsipeptide. In Aspergillus flavus (strain ATCC 200026 / FGSC A1120 / IAM 13836 / NRRL 3357 / JCM 12722 / SRRC 167), this protein is Nonribosomal peptide synthetase agiA.